Reading from the N-terminus, the 387-residue chain is Protein SGT1 homolog (387 aa).

3 TPR repeats span residues 1-34 (MEQL…SNNA), 36-67 (AFFK…DSNN), and 68-101 (SKYY…DSEN). Disordered stretches follow at residues 110–193 (KSKA…PSSG) and 299–323 (SPAV…EEKL). Low complexity predominate over residues 118–127 (NPTTTTTTTP). Pro residues predominate over residues 128–138 (TPTPTPTPAPQ). The segment covering 139–185 (PVTTTTNPTPIPTTSNTTTTTNNNNNNNNNNNNNNNNNNTTTDSTTT) has biased composition (low complexity). The CS domain maps to 193 to 282 (GNKVRHEWYQ…SRAIKWDTLE (90 aa)). One can recognise an SGS domain in the interval 301–387 (AVPSPYASKK…KGLEFKQYEK (87 aa)). Residues 308–323 (SKKDWDKLPNEPEEKL) are compositionally biased toward basic and acidic residues.

The protein belongs to the SGT1 family.

Functionally, may play a role in ubiquitination and subsequent proteasomal degradation of target proteins. The chain is Protein SGT1 homolog (sugt1) from Dictyostelium discoideum (Social amoeba).